The primary structure comprises 182 residues: 7-carboxy-7-deazaguanine synthase (182 aa).

Substrate is bound by residues 12-14 and R27; that span reads LQG. Positions 18-182 constitute a Radical SAM core domain; the sequence is HTGTPAVFIR…LQTHKLIDIR (165 aa). Residues C31, C35, and C38 each contribute to the [4Fe-4S] cluster site. T40 contributes to the Mg(2+) binding site. Residue T68 coordinates substrate. Residues G70 and 111–113 each bind S-adenosyl-L-methionine; that span reads SPK.

This sequence belongs to the radical SAM superfamily. 7-carboxy-7-deazaguanine synthase family. In terms of assembly, homodimer. The cofactor is [4Fe-4S] cluster. It depends on S-adenosyl-L-methionine as a cofactor. Mg(2+) is required as a cofactor.

It catalyses the reaction 6-carboxy-5,6,7,8-tetrahydropterin + H(+) = 7-carboxy-7-deazaguanine + NH4(+). It functions in the pathway purine metabolism; 7-cyano-7-deazaguanine biosynthesis. Catalyzes the complex heterocyclic radical-mediated conversion of 6-carboxy-5,6,7,8-tetrahydropterin (CPH4) to 7-carboxy-7-deazaguanine (CDG), a step common to the biosynthetic pathways of all 7-deazapurine-containing compounds. This chain is 7-carboxy-7-deazaguanine synthase, found in Bacteroides thetaiotaomicron (strain ATCC 29148 / DSM 2079 / JCM 5827 / CCUG 10774 / NCTC 10582 / VPI-5482 / E50).